Consider the following 179-residue polypeptide: Large ribosomal subunit protein uL5 (179 aa).

It belongs to the universal ribosomal protein uL5 family. Part of the 50S ribosomal subunit; part of the 5S rRNA/L5/L18/L25 subcomplex. Contacts the 5S rRNA and the P site tRNA. Forms a bridge to the 30S subunit in the 70S ribosome.

In terms of biological role, this is one of the proteins that bind and probably mediate the attachment of the 5S RNA into the large ribosomal subunit, where it forms part of the central protuberance. In the 70S ribosome it contacts protein S13 of the 30S subunit (bridge B1b), connecting the 2 subunits; this bridge is implicated in subunit movement. Contacts the P site tRNA; the 5S rRNA and some of its associated proteins might help stabilize positioning of ribosome-bound tRNAs. The polypeptide is Large ribosomal subunit protein uL5 (Geobacter sp. (strain M21)).